Here is a 367-residue protein sequence, read N- to C-terminus: Glutamate 5-kinase (367 aa).

Lysine 9 is a binding site for ATP. Substrate-binding residues include serine 49, aspartate 136, and asparagine 148. ATP is bound by residues threonine 168–aspartate 169 and threonine 210–lysine 216. The PUA domain occupies serine 276–arginine 350.

Belongs to the glutamate 5-kinase family.

The protein resides in the cytoplasm. The catalysed reaction is L-glutamate + ATP = L-glutamyl 5-phosphate + ADP. The protein operates within amino-acid biosynthesis; L-proline biosynthesis; L-glutamate 5-semialdehyde from L-glutamate: step 1/2. Catalyzes the transfer of a phosphate group to glutamate to form L-glutamate 5-phosphate. The protein is Glutamate 5-kinase of Bacillus cereus (strain G9842).